The primary structure comprises 505 residues: Probable cytosol aminopeptidase (505 aa).

The Mn(2+) site is built by Lys-269 and Asp-274. Lys-281 is a catalytic residue. Residues Asp-292, Asp-351, and Glu-353 each coordinate Mn(2+). The active site involves Arg-355.

This sequence belongs to the peptidase M17 family. Requires Mn(2+) as cofactor.

The protein localises to the cytoplasm. It catalyses the reaction Release of an N-terminal amino acid, Xaa-|-Yaa-, in which Xaa is preferably Leu, but may be other amino acids including Pro although not Arg or Lys, and Yaa may be Pro. Amino acid amides and methyl esters are also readily hydrolyzed, but rates on arylamides are exceedingly low.. The catalysed reaction is Release of an N-terminal amino acid, preferentially leucine, but not glutamic or aspartic acids.. Presumably involved in the processing and regular turnover of intracellular proteins. Catalyzes the removal of unsubstituted N-terminal amino acids from various peptides. This Rhodococcus opacus (strain B4) protein is Probable cytosol aminopeptidase.